Here is a 451-residue protein sequence, read N- to C-terminus: Metalloprotease MJ0996 (451 aa).

It belongs to the peptidase U62 family.

Probable metalloprotease. The polypeptide is Metalloprotease MJ0996 (Methanocaldococcus jannaschii (strain ATCC 43067 / DSM 2661 / JAL-1 / JCM 10045 / NBRC 100440) (Methanococcus jannaschii)).